The following is a 198-amino-acid chain: Copy number protein (198 aa).

It is found in the cell membrane. Functionally, involved in copy number control of pIP404. This basic and hydrophobic protein may exert its effect from the cytoplasmic membrane. This chain is Copy number protein (cop), found in Clostridium perfringens.